A 48-amino-acid polypeptide reads, in one-letter code: Palustrin-3b (48 aa).

An intrachain disulfide couples Cys-43 to Cys-48.

Expressed by the skin glands.

The protein localises to the secreted. Functionally, antimicrobial activity against Gram-negative bacterium E.coli. This Lithobates palustris (Pickerel frog) protein is Palustrin-3b.